We begin with the raw amino-acid sequence, 716 residues long: uncharacterized protein (716 aa).

Disordered stretches follow at residues 84–103 (SPSIIGVPSETQTSPVERYP) and 153–189 (VTDEDSDFEPQTQRPQSIARKRPGIVPSSIHSSSQGQ). Phosphoserine is present on Ser97. Glycyl lysine isopeptide (Lys-Gly) (interchain with G-Cter in SUMO2) cross-links involve residues Lys201, Lys204, Lys237, Lys283, and Lys626.

This is an uncharacterized protein from Mus musculus (Mouse).